The sequence spans 126 residues: UPF0292 protein TSIB_0423 (126 aa).

The region spanning 20–100 is the Toprim domain; it reads NGVILVEGMR…RVDTNTRREL (81 aa). Mg(2+) contacts are provided by Glu-26, Asp-69, and Asp-71.

The protein belongs to the UPF0292 family. Mg(2+) serves as cofactor.

This is UPF0292 protein TSIB_0423 from Thermococcus sibiricus (strain DSM 12597 / MM 739).